Reading from the N-terminus, the 537-residue chain is Mitochondria-eating protein (537 aa).

The tract at residues 1–273 is interaction with YWHAG/14-3-3 protein gamma; that stretch reads MADNLRRLVS…PCSRSHSRSR (273 aa). Phosphoserine is present on residues Ser85, Ser127, Ser154, and Ser157. A coiled-coil region spans residues 115–253; it reads GTRDIQQLDA…SAEKSVLQGR (139 aa). 2 disordered regions span residues 171-221 and 249-293; these read QLKS…ANQR and VLQG…AKLS. The span at 179 to 217 shows a compositional bias: basic and acidic residues; sequence EESRHRNSDRRRSEKRGSERRRVELRGSEQRVSDLDRRS. The segment covering 253–287 has biased composition (low complexity); sequence RSARSRSPSPAPCSRSHSRSRSTSPSSAKARTPSP. A phosphoserine mark is found at Ser286 and Ser508.

Belongs to the MIEAP family. As to quaternary structure, interacts (via coiled-coil domains) with BNIP3L (via BH3 domain). Interacts (via coiled-coil domains) with BNIP3 (via BH3 domain). Interacts with YWHAG/14-3-3 protein gamma; a protein that also plays a role in MALM.

It is found in the cytoplasm. It localises to the cytosol. The protein resides in the mitochondrion outer membrane. The protein localises to the mitochondrion matrix. In terms of biological role, key regulator of mitochondrial quality that mediates the repairing or degradation of unhealthy mitochondria in response to mitochondrial damage. Mediator of mitochondrial protein catabolic process (also named MALM) by mediating the degradation of damaged proteins inside mitochondria by promoting the accumulation in the mitochondrial matrix of hydrolases that are characteristic of the lysosomal lumen. Also involved in mitochondrion degradation of damaged mitochondria by promoting the formation of vacuole-like structures (named MIV), which engulf and degrade unhealthy mitochondria by accumulating lysosomes. The physical interaction of SPATA18/MIEAP, BNIP3 and BNIP3L/NIX at the mitochondrial outer membrane regulates the opening of a pore in the mitochondrial double membrane in order to mediate the translocation of lysosomal proteins from the cytoplasm to the mitochondrial matrix. Binds cardiolipin. May form molecular condensates (non-membrane-bounded organelles) within mitochondria that compartmentalize and promote cardiolipin metabolism. This Bos taurus (Bovine) protein is Mitochondria-eating protein (SPATA18).